A 500-amino-acid polypeptide reads, in one-letter code: MKIYGEKKIWFVTGSQHLYGPGVLAQVAENSQAIAAGLTASEHVSANIESRGVVTTPKEILDVCQAANSDENCVGLILWMHTFSPAKMWIAGLSALNKPYMHLHTQFGAALPWGDINMNYMNLNQSAHGDREFGYIGTRLRQERKVVVGHWQKESVQIQVDDWVRAAMGWAESQTLKVARFGDNMRQVAVTEGDKVSAQIQFGYEVHAFGLGDLAKACEKITAEQITAQLELYKQDYEIDADVFTDVHSLEMLQNEARLELGMEAFLEEGNFKAFTNCFENLTGLSGLPGLATQRLMSKGYGYGGEGDWKTAAMCRIVKVMSLGKAAGTSFMEDYTYNFGDPDQVLGAHMLEVCPSISNEKPKVVVERHTIGIKKDIARLIFTGTPGPAINISTIDMGTRFRIIANEVDTVKPPQDLPNLPVAKALWEPRPSLEVAAAAWIHAGGAHHSVYTQGINLDQLNDFAEMAGVEMVVIGADTNVNEFKKELRFNAVYYHLSHGI.

Residues glutamate 306, glutamate 333, histidine 349, and histidine 448 each contribute to the Mn(2+) site.

Belongs to the arabinose isomerase family. Mn(2+) serves as cofactor.

It catalyses the reaction beta-L-arabinopyranose = L-ribulose. Its pathway is carbohydrate degradation; L-arabinose degradation via L-ribulose; D-xylulose 5-phosphate from L-arabinose (bacterial route): step 1/3. In terms of biological role, catalyzes the conversion of L-arabinose to L-ribulose. In Saccharophagus degradans (strain 2-40 / ATCC 43961 / DSM 17024), this protein is L-arabinose isomerase.